The primary structure comprises 340 residues: Ribosomal RNA small subunit methyltransferase C (340 aa).

It belongs to the methyltransferase superfamily. RsmC family. As to quaternary structure, monomer.

Its subcellular location is the cytoplasm. It carries out the reaction guanosine(1207) in 16S rRNA + S-adenosyl-L-methionine = N(2)-methylguanosine(1207) in 16S rRNA + S-adenosyl-L-homocysteine + H(+). Specifically methylates the guanine in position 1207 of 16S rRNA in the 30S particle. This Vibrio cholerae serotype O1 (strain ATCC 39541 / Classical Ogawa 395 / O395) protein is Ribosomal RNA small subunit methyltransferase C.